We begin with the raw amino-acid sequence, 32 residues long: Calcitonin (32 aa).

Cysteines 1 and 7 form a disulfide. At P32 the chain carries Proline amide.

The protein belongs to the calcitonin family.

The protein resides in the secreted. In terms of biological role, causes a rapid but short-lived drop in the level of calcium and phosphate in blood by promoting the incorporation of those ions in the bones. In Anguilla japonica (Japanese eel), this protein is Calcitonin.